The following is a 187-amino-acid chain: Large ribosomal subunit protein uL5 (187 aa).

Belongs to the universal ribosomal protein uL5 family. Part of the 50S ribosomal subunit; part of the 5S rRNA/L5/L18/L25 subcomplex. Contacts the 5S rRNA and the P site tRNA. Forms a bridge to the 30S subunit in the 70S ribosome.

This is one of the proteins that bind and probably mediate the attachment of the 5S RNA into the large ribosomal subunit, where it forms part of the central protuberance. In the 70S ribosome it contacts protein S13 of the 30S subunit (bridge B1b), connecting the 2 subunits; this bridge is implicated in subunit movement. Contacts the P site tRNA; the 5S rRNA and some of its associated proteins might help stabilize positioning of ribosome-bound tRNAs. In Gluconobacter oxydans (strain 621H) (Gluconobacter suboxydans), this protein is Large ribosomal subunit protein uL5.